Consider the following 557-residue polypeptide: Leucine-rich glioma-inactivated protein 1 (557 aa).

The first 34 residues, 1–34, serve as a signal peptide directing secretion; the sequence is MESERSKRMGNACIPLKRIAYFLCLLSALLLTEG. The 38-residue stretch at 35-72 folds into the LRRNT domain; it reads KKPAKPKCPAVCTCTKDNALCENARSIPRTVPPDVISL. LRR repeat units follow at residues 92-113, 116-137, and 140-161; these read SLQLLLFTSNSFDVISDDAFIG, HLEYLFIENNNIKSISRHTFRG, and SLIHLSLANNNLQTLPKDIFKG. An LRRCT domain is found at 173–223; sequence NSFNCDCKLKWLVEWLGHTNATVEDIYCEGPPEYKKRKINSLSSKDFDCII. The N-linked (GlcNAc...) asparagine glycan is linked to asparagine 192. EAR repeat units follow at residues 225-267, 271-313, 317-364, 366-415, 419-462, 464-506, and 510-552; these read EFAK…EWDH, TFRN…KRDS, KFIK…KWNG, GFYS…QWNK, SFTN…KWGG, SFQD…NWDA, and KFVK…KHVI. The N-linked (GlcNAc...) asparagine glycan is linked to asparagine 277. Residue asparagine 422 is glycosylated (N-linked (GlcNAc...) asparagine).

As to quaternary structure, oligomer. Interacts with KCNA1 within a complex containing KCNA1, KCNA4 and KCNAB1. Part of a complex containing ADAM22, DLG4/PSD95 and CACNG2 (stargazin). Can bind to ADAM11 and ADAM23. Glycosylated.

The protein localises to the secreted. Its subcellular location is the synapse. It is found in the cytoplasm. Functionally, regulates voltage-gated potassium channels assembled from KCNA1, KCNA4 and KCNAB1. It slows down channel inactivation by precluding channel closure mediated by the KCNAB1 subunit. Ligand for ADAM22 that positively regulates synaptic transmission mediated by AMPA-type glutamate receptors. Plays a role in suppressing the production of MMP1/3 through the phosphatidylinositol 3-kinase/ERK pathway. In Pan troglodytes (Chimpanzee), this protein is Leucine-rich glioma-inactivated protein 1 (LGI1).